The chain runs to 351 residues: Meiotically up-regulated gene 1 protein (351 aa).

The protein resides in the cytoplasm. Required for correct meiotic chromosome segregation. The polypeptide is Meiotically up-regulated gene 1 protein (mug1) (Schizosaccharomyces pombe (strain 972 / ATCC 24843) (Fission yeast)).